We begin with the raw amino-acid sequence, 486 residues long: Probable glycine dehydrogenase (decarboxylating) subunit 2 (486 aa).

An N6-(pyridoxal phosphate)lysine modification is found at lysine 269.

This sequence belongs to the GcvP family. C-terminal subunit subfamily. As to quaternary structure, the glycine cleavage system is composed of four proteins: P, T, L and H. In this organism, the P 'protein' is a heterodimer of two subunits. Requires pyridoxal 5'-phosphate as cofactor.

It catalyses the reaction N(6)-[(R)-lipoyl]-L-lysyl-[glycine-cleavage complex H protein] + glycine + H(+) = N(6)-[(R)-S(8)-aminomethyldihydrolipoyl]-L-lysyl-[glycine-cleavage complex H protein] + CO2. Functionally, the glycine cleavage system catalyzes the degradation of glycine. The P protein binds the alpha-amino group of glycine through its pyridoxal phosphate cofactor; CO(2) is released and the remaining methylamine moiety is then transferred to the lipoamide cofactor of the H protein. The protein is Probable glycine dehydrogenase (decarboxylating) subunit 2 of Chlorobaculum tepidum (strain ATCC 49652 / DSM 12025 / NBRC 103806 / TLS) (Chlorobium tepidum).